Consider the following 249-residue polypeptide: Coproheme decarboxylase (249 aa).

Fe-coproporphyrin III is bound by residues Arg131, 145-149, His172, Gln185, and Ser223; that span reads YPMNK. Tyr145 is an active-site residue.

It belongs to the ChdC family. Type 1 subfamily. It depends on Fe-coproporphyrin III as a cofactor.

It catalyses the reaction Fe-coproporphyrin III + 2 H2O2 + 2 H(+) = heme b + 2 CO2 + 4 H2O. The enzyme catalyses Fe-coproporphyrin III + H2O2 + H(+) = harderoheme III + CO2 + 2 H2O. The catalysed reaction is harderoheme III + H2O2 + H(+) = heme b + CO2 + 2 H2O. It participates in porphyrin-containing compound metabolism; protoheme biosynthesis. Functionally, involved in coproporphyrin-dependent heme b biosynthesis. Catalyzes the decarboxylation of Fe-coproporphyrin III (coproheme) to heme b (protoheme IX), the last step of the pathway. The reaction occurs in a stepwise manner with a three-propionate intermediate. The protein is Coproheme decarboxylase of Thermus thermophilus (strain ATCC BAA-163 / DSM 7039 / HB27).